The primary structure comprises 201 residues: ATP-dependent Clp protease proteolytic subunit (201 aa).

The active-site Nucleophile is S98. Residue H123 is part of the active site.

It belongs to the peptidase S14 family. In terms of assembly, fourteen ClpP subunits assemble into 2 heptameric rings which stack back to back to give a disk-like structure with a central cavity, resembling the structure of eukaryotic proteasomes.

Its subcellular location is the cytoplasm. It carries out the reaction Hydrolysis of proteins to small peptides in the presence of ATP and magnesium. alpha-casein is the usual test substrate. In the absence of ATP, only oligopeptides shorter than five residues are hydrolyzed (such as succinyl-Leu-Tyr-|-NHMec, and Leu-Tyr-Leu-|-Tyr-Trp, in which cleavage of the -Tyr-|-Leu- and -Tyr-|-Trp bonds also occurs).. Functionally, cleaves peptides in various proteins in a process that requires ATP hydrolysis. Has a chymotrypsin-like activity. Plays a major role in the degradation of misfolded proteins. This is ATP-dependent Clp protease proteolytic subunit from Rickettsia typhi (strain ATCC VR-144 / Wilmington).